A 61-amino-acid polypeptide reads, in one-letter code: MAKKSLIVKQQRKPKYRTRAYNRCKLCGRPHAYMRKFGICRLCFRDLAYKGQIPGVRKASW.

Positions 24, 27, 40, and 43 each coordinate Zn(2+).

The protein belongs to the universal ribosomal protein uS14 family. Zinc-binding uS14 subfamily. In terms of assembly, part of the 30S ribosomal subunit. Contacts proteins S3 and S10. Zn(2+) is required as a cofactor.

Its function is as follows. Binds 16S rRNA, required for the assembly of 30S particles and may also be responsible for determining the conformation of the 16S rRNA at the A site. This Acetivibrio thermocellus (strain ATCC 27405 / DSM 1237 / JCM 9322 / NBRC 103400 / NCIMB 10682 / NRRL B-4536 / VPI 7372) (Clostridium thermocellum) protein is Small ribosomal subunit protein uS14.